A 615-amino-acid chain; its full sequence is Proteasome-associated ATPase (615 aa).

Over residues 1-13 the composition is skewed to basic and acidic residues; sequence MSESQRHEAREDG. The interval 1–32 is disordered; that stretch reads MSESQRHEAREDGFTTPHESGLSSEDAAELEE. The stretch at 22-100 forms a coiled coil; it reads LSSEDAAELE…LREEVDRLGQ (79 aa). Residue 302 to 307 participates in ATP binding; the sequence is GCGKTL. Positions 614–615 are docks into pockets in the proteasome alpha-ring; the sequence is YL.

Belongs to the AAA ATPase family. As to quaternary structure, homohexamer. Assembles into a hexameric ring structure that caps the 20S proteasome core. Strongly interacts with the prokaryotic ubiquitin-like protein Pup through a hydrophobic interface; the interacting region of ARC lies in its N-terminal coiled-coil domain. There is one Pup binding site per ARC hexamer ring. Upon ATP-binding, the C-terminus of ARC interacts with the alpha-rings of the proteasome core, possibly by binding to the intersubunit pockets.

Its pathway is protein degradation; proteasomal Pup-dependent pathway. In terms of biological role, ATPase which is responsible for recognizing, binding, unfolding and translocation of pupylated proteins into the bacterial 20S proteasome core particle. May be essential for opening the gate of the 20S proteasome via an interaction with its C-terminus, thereby allowing substrate entry and access to the site of proteolysis. Thus, the C-termini of the proteasomal ATPase may function like a 'key in a lock' to induce gate opening and therefore regulate proteolysis. This is Proteasome-associated ATPase from Mycobacterium sp. (strain JLS).